Reading from the N-terminus, the 424-residue chain is Dapdiamide A synthase (424 aa).

An ATP-grasp domain is found at 120-318 (QEQLALKGVA…QISKLAQAVL (199 aa)). 147–209 (AGHAHWPVVL…QEFLAGEEFV (63 aa)) contributes to the ATP binding site. Residues Glu-275 and Glu-287 each coordinate Mg(2+).

Requires Mg(2+) as cofactor. The cofactor is Mn(2+).

It carries out the reaction 3-[[[(2R,3R)-3-carboxyoxiran-2-yl]carbonyl]amino]-L-alanine + L-valine + ATP = dapdiamide E + ADP + phosphate + H(+). The enzyme catalyses N(3)-fumaramoyl-(S)-2,3-diaminopropanoate + L-valine + ATP = dapdiamide A + ADP + phosphate + H(+). It catalyses the reaction N(3)-fumaramoyl-(S)-2,3-diaminopropanoate + L-isoleucine + ATP = dapdiamide B + ADP + phosphate + H(+). The catalysed reaction is N(3)-fumaramoyl-(S)-2,3-diaminopropanoate + L-leucine + ATP = dapdiamide C + ADP + phosphate + H(+). Its pathway is antibiotic biosynthesis. In terms of biological role, involved in dapdiamide antibiotics biosynthesis. Ligates N-beta-fumaramoyl-DAP and valine, isoleucine or leucine to form dapdiamides A, B or C, respectively. Also ligates N-beta-epoxysuccinamoyl-DAP and valine to form dapdiamide E. The chain is Dapdiamide A synthase from Enterobacter agglomerans (Erwinia herbicola).